Here is a 385-residue protein sequence, read N- to C-terminus: UPF0284 protein PMM0439 (385 aa).

It belongs to the UPF0284 family.

In Prochlorococcus marinus subsp. pastoris (strain CCMP1986 / NIES-2087 / MED4), this protein is UPF0284 protein PMM0439.